A 59-amino-acid polypeptide reads, in one-letter code: UPF0391 membrane protein lpg2521 (59 aa).

Helical transmembrane passes span 5–25 (ALIF…GIAV) and 30–50 (IAKI…IMGL).

The protein belongs to the UPF0391 family.

The protein resides in the cell membrane. This is UPF0391 membrane protein lpg2521 from Legionella pneumophila subsp. pneumophila (strain Philadelphia 1 / ATCC 33152 / DSM 7513).